A 278-amino-acid chain; its full sequence is Secreted RxLR effector protein 151 (278 aa).

The N-terminal stretch at M1–C18 is a signal peptide. The short motif at R49–R64 is the RxLR-dEER element.

This sequence belongs to the RxLR effector family.

The protein resides in the secreted. Its subcellular location is the host endoplasmic reticulum membrane. Its function is as follows. Secreted effector that completely suppresses the host cell death induced by cell death-inducing proteins. The protein is Secreted RxLR effector protein 151 of Plasmopara viticola (Downy mildew of grapevine).